A 237-amino-acid polypeptide reads, in one-letter code: Ribosomal RNA small subunit methyltransferase G (237 aa).

S-adenosyl-L-methionine-binding positions include glycine 78, phenylalanine 83, 129–130 (AE), and arginine 148. The interval 218–237 (KKETPNKYPRKAGMPNKRPL) is disordered.

It belongs to the methyltransferase superfamily. RNA methyltransferase RsmG family.

The protein localises to the cytoplasm. Its function is as follows. Specifically methylates the N7 position of a guanine in 16S rRNA. The chain is Ribosomal RNA small subunit methyltransferase G from Streptococcus pneumoniae (strain ATCC BAA-255 / R6).